Reading from the N-terminus, the 1301-residue chain is Tyrosine-protein phosphatase 99A (1301 aa).

The N-terminal stretch at 1-28 (MPRPQHHALLRAMLKLLLFASIAEHCAT) is a signal peptide. At 29-394 (ALPTNSSNSP…RQSHNDYNLA (366 aa)) the chain is on the extracellular side. The disordered stretch occupies residues 31-63 (PTNSSNSPSSPSPFTVASLPPTTASSSSSPAVI). N-linked (GlcNAc...) asparagine glycosylation is present at N33. Low complexity predominate over residues 33 to 63 (NSSNSPSSPSPFTVASLPPTTASSSSSPAVI). Fibronectin type-III domains lie at 66-165 (SSFD…YAAV), 173-269 (KPQN…TDVG), and 270-376 (GPSA…LQPN). Residues N176, N212, N278, N322, and N336 are each glycosylated (N-linked (GlcNAc...) asparagine). The chain crosses the membrane as a helical span at residues 395-415 (VLVGIIFSCFGIILIIMAFFL). Over 416-1301 (WSRKCFHAAY…TDAQNLDIVG (886 aa)) the chain is Cytoplasmic. Tyrosine-protein phosphatase domains are found at residues 476 to 741 (FSRE…LVEA) and 764 to 1016 (LEQQ…LSFL). The active-site Phosphocysteine intermediate is C682. Residues 1092–1106 (TALNETVSTPSTDTN) are compositionally biased toward polar residues. Disordered stretches follow at residues 1092 to 1199 (TALN…PTIP) and 1257 to 1281 (VGDLLMNNADNSPTASPTITNNNHI). Positions 1107–1130 (PSLLPILSLLPPTVAPLSSSSSTT) are enriched in low complexity. A compositionally biased stretch (pro residues) spans 1131-1142 (PPTPSTPTPQPP). The segment covering 1150–1161 (HSPSDLSHQISS) has biased composition (polar residues). Over residues 1162 to 1188 (TVANAASPVTPATASASAGATPTTPMT) the composition is skewed to low complexity. Residues 1264–1273 (NADNSPTASP) show a composition bias toward polar residues.

Belongs to the protein-tyrosine phosphatase family. Receptor class subfamily. As to expression, selectively expressed in a subset of axons and pioneer neurons (including aCC and RP2) in the embryo.

Its subcellular location is the membrane. The catalysed reaction is O-phospho-L-tyrosyl-[protein] + H2O = L-tyrosyl-[protein] + phosphate. Functionally, may play a key role in signal transduction and growth control. May have a role in the establishment of the intersegmental and segmental nerves. This chain is Tyrosine-protein phosphatase 99A (Ptp99A), found in Drosophila melanogaster (Fruit fly).